We begin with the raw amino-acid sequence, 321 residues long: Ribosomal RNA small subunit methyltransferase H (321 aa).

Residues 40–42, Asp-60, Phe-84, Asp-106, and Gln-113 contribute to the S-adenosyl-L-methionine site; that span reads GGH.

It belongs to the methyltransferase superfamily. RsmH family.

It is found in the cytoplasm. The enzyme catalyses cytidine(1402) in 16S rRNA + S-adenosyl-L-methionine = N(4)-methylcytidine(1402) in 16S rRNA + S-adenosyl-L-homocysteine + H(+). Functionally, specifically methylates the N4 position of cytidine in position 1402 (C1402) of 16S rRNA. In Pasteurella multocida (strain Pm70), this protein is Ribosomal RNA small subunit methyltransferase H.